Reading from the N-terminus, the 338-residue chain is Formamidase (338 aa).

Residues 14-257 (VGIGLVQLQL…NEIITAEVRP (244 aa)) enclose the CN hydrolase domain. Glu-60 acts as the Proton acceptor in catalysis. Lys-129 functions as the Proton donor in the catalytic mechanism. Cys-162 (nucleophile) is an active-site residue.

It belongs to the carbon-nitrogen hydrolase superfamily. Aliphatic amidase family.

It carries out the reaction formamide + H2O = formate + NH4(+). Its function is as follows. Is an aliphatic amidase with a restricted substrate specificity, as it only hydrolyzes formamide. This chain is Formamidase, found in Allorhizobium ampelinum (strain ATCC BAA-846 / DSM 112012 / S4) (Agrobacterium vitis (strain S4)).